Here is a 385-residue protein sequence, read N- to C-terminus: Putative RNA methyltransferase YpsC (385 aa).

The THUMP domain maps to Ala-44–Ser-156.

This sequence belongs to the methyltransferase superfamily. Interacts with the RNA polymerase core.

The polypeptide is Putative RNA methyltransferase YpsC (ypsC) (Bacillus subtilis (strain 168)).